The chain runs to 325 residues: Phosphate import ATP-binding protein PstB (325 aa).

The 242-residue stretch at 79-320 (IDNYNLWYSN…PNNEKTKDYI (242 aa)) folds into the ABC transporter domain. 111-118 (GPSGCGKS) is a binding site for ATP.

It belongs to the ABC transporter superfamily. Phosphate importer (TC 3.A.1.7) family. As to quaternary structure, the complex is composed of two ATP-binding proteins (PstB), two transmembrane proteins (PstC and PstA) and a solute-binding protein (PstS).

Its subcellular location is the cell membrane. It carries out the reaction phosphate(out) + ATP + H2O = ADP + 2 phosphate(in) + H(+). In terms of biological role, part of the ABC transporter complex PstSACB involved in phosphate import. Responsible for energy coupling to the transport system. This chain is Phosphate import ATP-binding protein PstB, found in Mycoplasmoides gallisepticum (strain R(low / passage 15 / clone 2)) (Mycoplasma gallisepticum).